Here is a 93-residue protein sequence, read N- to C-terminus: UPF0358 protein lwe1048 (93 aa).

It belongs to the UPF0358 family.

The protein is UPF0358 protein lwe1048 of Listeria welshimeri serovar 6b (strain ATCC 35897 / DSM 20650 / CCUG 15529 / CIP 8149 / NCTC 11857 / SLCC 5334 / V8).